Consider the following 271-residue polypeptide: Putative phosphoenolpyruvate synthase regulatory protein (271 aa).

G152–T159 is a binding site for ADP.

Belongs to the pyruvate, phosphate/water dikinase regulatory protein family. PSRP subfamily.

The catalysed reaction is [pyruvate, water dikinase] + ADP = [pyruvate, water dikinase]-phosphate + AMP + H(+). It catalyses the reaction [pyruvate, water dikinase]-phosphate + phosphate + H(+) = [pyruvate, water dikinase] + diphosphate. Functionally, bifunctional serine/threonine kinase and phosphorylase involved in the regulation of the phosphoenolpyruvate synthase (PEPS) by catalyzing its phosphorylation/dephosphorylation. This chain is Putative phosphoenolpyruvate synthase regulatory protein, found in Thiocapsa roseopersicina.